An 84-amino-acid polypeptide reads, in one-letter code: Large ribosomal subunit protein bL27 (84 aa).

The protein belongs to the bacterial ribosomal protein bL27 family.

The polypeptide is Large ribosomal subunit protein bL27 (Campylobacter jejuni subsp. jejuni serotype O:6 (strain 81116 / NCTC 11828)).